Reading from the N-terminus, the 94-residue chain is Co-chaperonin GroES (94 aa).

The protein belongs to the GroES chaperonin family. Heptamer of 7 subunits arranged in a ring. Interacts with the chaperonin GroEL.

Its subcellular location is the cytoplasm. Functionally, together with the chaperonin GroEL, plays an essential role in assisting protein folding. The GroEL-GroES system forms a nano-cage that allows encapsulation of the non-native substrate proteins and provides a physical environment optimized to promote and accelerate protein folding. GroES binds to the apical surface of the GroEL ring, thereby capping the opening of the GroEL channel. In Caldanaerobacter subterraneus subsp. tengcongensis (strain DSM 15242 / JCM 11007 / NBRC 100824 / MB4) (Thermoanaerobacter tengcongensis), this protein is Co-chaperonin GroES.